A 298-amino-acid polypeptide reads, in one-letter code: tRNA pseudouridine synthase B (298 aa).

Asp-39 serves as the catalytic Nucleophile.

This sequence belongs to the pseudouridine synthase TruB family. Type 1 subfamily.

It carries out the reaction uridine(55) in tRNA = pseudouridine(55) in tRNA. Its function is as follows. Responsible for synthesis of pseudouridine from uracil-55 in the psi GC loop of transfer RNAs. The polypeptide is tRNA pseudouridine synthase B (Oenococcus oeni (strain ATCC BAA-331 / PSU-1)).